A 972-amino-acid polypeptide reads, in one-letter code: Hemoglobin and hemoglobin-haptoglobin-binding protein (972 aa).

Positions 1–22 (MKANKLSAITLCILGYAHTVYA) are cleaved as a signal peptide. The short motif at 32–39 (ETIVVSSE) is the TonB box element. Residues 38 to 167 (SEDDSVHNKN…LGGTVSFESK (130 aa)) form the TBDR plug domain. The 798-residue stretch at 175-972 (DKNYHFGYKT…NFRVNAEITF (798 aa)) folds into the TBDR beta-barrel domain. A TonB C-terminal box motif is present at residues 955 to 972 (KRFNAPGRNFRVNAEITF).

It belongs to the TonB-dependent receptor family. Hemoglobin/haptoglobin binding protein subfamily.

It is found in the cell outer membrane. Functionally, acts as a receptor for hemoglobin or the hemoglobin/haptoglobin complex of the host and is required for heme uptake. May be involved in virulence. This is Hemoglobin and hemoglobin-haptoglobin-binding protein from Haemophilus ducreyi (strain 35000HP / ATCC 700724).